A 648-amino-acid chain; its full sequence is Probable potassium transport system protein Kup 1 (648 aa).

Residues 1 to 31 (MSDAVTDADGSSAQSHAQSAGHHAVQGHGGH) are disordered. Residues 10 to 26 (GSSAQSHAQSAGHHAVQ) show a composition bias toward low complexity. 12 consecutive transmembrane segments (helical) span residues 39-59 (LAVG…LYAL), 73-93 (LLHI…IVTF), 130-150 (IILL…ITPA), 165-185 (PDMH…LFFI), 193-213 (VAAF…VLGA), 243-263 (FLAM…YADM), 275-295 (WLVF…SLLI), 317-337 (LLFI…SGAF), 364-384 (IFIP…VLVF), 394-414 (YGIA…VVLF), 421-441 (APAA…YLGA), and 446-466 (IPDG…LLTT).

This sequence belongs to the HAK/KUP transporter (TC 2.A.72) family.

The protein resides in the cell inner membrane. The catalysed reaction is K(+)(in) + H(+)(in) = K(+)(out) + H(+)(out). Functionally, transport of potassium into the cell. Likely operates as a K(+):H(+) symporter. In Novosphingobium aromaticivorans (strain ATCC 700278 / DSM 12444 / CCUG 56034 / CIP 105152 / NBRC 16084 / F199), this protein is Probable potassium transport system protein Kup 1.